Consider the following 299-residue polypeptide: ATP phosphoribosyltransferase (299 aa).

It belongs to the ATP phosphoribosyltransferase family. Long subfamily. As to quaternary structure, equilibrium between an active dimeric form, an inactive hexameric form and higher aggregates. Interconversion between the various forms is largely reversible and is influenced by the natural substrates and inhibitors of the enzyme. Mg(2+) serves as cofactor.

Its subcellular location is the cytoplasm. The catalysed reaction is 1-(5-phospho-beta-D-ribosyl)-ATP + diphosphate = 5-phospho-alpha-D-ribose 1-diphosphate + ATP. It functions in the pathway amino-acid biosynthesis; L-histidine biosynthesis; L-histidine from 5-phospho-alpha-D-ribose 1-diphosphate: step 1/9. With respect to regulation, feedback inhibited by histidine. Its function is as follows. Catalyzes the condensation of ATP and 5-phosphoribose 1-diphosphate to form N'-(5'-phosphoribosyl)-ATP (PR-ATP). Has a crucial role in the pathway because the rate of histidine biosynthesis seems to be controlled primarily by regulation of HisG enzymatic activity. This is ATP phosphoribosyltransferase from Pectobacterium atrosepticum (strain SCRI 1043 / ATCC BAA-672) (Erwinia carotovora subsp. atroseptica).